Here is a 474-residue protein sequence, read N- to C-terminus: tRNA-2-methylthio-N(6)-dimethylallyladenosine synthase (474 aa).

The MTTase N-terminal domain occupies 3-120 (KKLHIKTWGC…LPEMINHVQG (118 aa)). 6 residues coordinate [4Fe-4S] cluster: cysteine 12, cysteine 49, cysteine 83, cysteine 157, cysteine 161, and cysteine 164. The region spanning 143–375 (RAEGPTAFVS…QQRITQQAME (233 aa)) is the Radical SAM core domain. The TRAM domain maps to 378–441 (REMVGTVQRI…ASSLRGILLR (64 aa)).

This sequence belongs to the methylthiotransferase family. MiaB subfamily. Monomer. [4Fe-4S] cluster is required as a cofactor.

It localises to the cytoplasm. It carries out the reaction N(6)-dimethylallyladenosine(37) in tRNA + (sulfur carrier)-SH + AH2 + 2 S-adenosyl-L-methionine = 2-methylsulfanyl-N(6)-dimethylallyladenosine(37) in tRNA + (sulfur carrier)-H + 5'-deoxyadenosine + L-methionine + A + S-adenosyl-L-homocysteine + 2 H(+). Catalyzes the methylthiolation of N6-(dimethylallyl)adenosine (i(6)A), leading to the formation of 2-methylthio-N6-(dimethylallyl)adenosine (ms(2)i(6)A) at position 37 in tRNAs that read codons beginning with uridine. The protein is tRNA-2-methylthio-N(6)-dimethylallyladenosine synthase of Yersinia enterocolitica serotype O:8 / biotype 1B (strain NCTC 13174 / 8081).